A 387-amino-acid chain; its full sequence is Aminodeoxyfutalosine deaminase (387 aa).

The span at 1-10 (MRPAYDDPRT) shows a compositional bias: basic and acidic residues. Positions 1-37 (MRPAYDDPRTTDQPITRARPPPRAARGRRLGEEPLTE) are disordered. His-61 and His-63 together coordinate Zn(2+). Positions 116, 183, and 217 each coordinate substrate. His-244 lines the Zn(2+) pocket. Glu-247 acts as the Proton donor in catalysis. Residue Asp-325 coordinates Zn(2+).

Belongs to the metallo-dependent hydrolases superfamily. Adenosine and AMP deaminases family. The cofactor is Zn(2+).

The enzyme catalyses 6-amino-6-deoxyfutalosine + H2O + H(+) = futalosine + NH4(+). The protein operates within quinol/quinone metabolism; menaquinone biosynthesis. Its function is as follows. Catalyzes the deamination of aminodeoxyfutalosine (AFL) into futalosine (FL), a step in the biosynthesis of menaquinone (MK, vitamin K2). The chain is Aminodeoxyfutalosine deaminase from Streptomyces coelicolor (strain ATCC BAA-471 / A3(2) / M145).